The primary structure comprises 1588 residues: Centrosomal protein of 170 kDa (1588 aa).

The region spanning 23–73 (IFVGRDDCELMLQSRSVDKQHAVINYDASMDEHLVKDLGSLNGTFVNDVRI) is the FHA domain. Disordered stretches follow at residues 121–172 (LSQK…MPRG), 299–323 (KFTS…GIQT), 338–447 (QNNP…EEPS), and 461–508 (SGSL…NPNS). The residue at position 141 (S141) is a Phosphoserine. A compositionally biased stretch (basic and acidic residues) spans 155-164 (EALKSEEKPM). Basic and acidic residues predominate over residues 347-357 (ERTEEDSKSIK). Phosphoserine occurs at positions 355 and 358. Y363 bears the Phosphotyrosine mark. Residues 407 to 418 (KKKAQSTEKHQE) are compositionally biased toward basic and acidic residues. 3 positions are modified to phosphoserine: S443, S463, and S494. Position 498 is a phosphothreonine (T498). S568, S577, S628, and S631 each carry phosphoserine. Residues 602–854 (ELSATVENET…PHINKQNSSV (253 aa)) are disordered. A compositionally biased stretch (polar residues) spans 620–631 (LRSTSCTTSLAS). T639 is modified (phosphothreonine). The segment covering 645 to 654 (NEEKLLESSR) has biased composition (basic and acidic residues). A Phosphoserine modification is found at S662. A compositionally biased stretch (basic and acidic residues) spans 663 to 691 (EIGEKQDTELQEKEAQVYQSEKHDADRGL). At S718 the chain carries Phosphoserine. Positions 720-731 (SKEKSETEKETS) are enriched in basic and acidic residues. T752 bears the Phosphothreonine mark. 2 stretches are compositionally biased toward basic and acidic residues: residues 764–774 (HIDKCREESSK) and 789–821 (SKGD…KESS). A compositionally biased stretch (polar residues) spans 822 to 839 (KSLVRQGSFTIDKPSSNI). Residues S829, S870, and S872 each carry the phosphoserine modification. The targeting to microtubules stretch occupies residues 844–1588 (IPHINKQNSS…GEEEDVTVHE (745 aa)). Positions 899-908 (LREDNNKTDE) are enriched in basic and acidic residues. Disordered regions lie at residues 899–1222 (LRED…RWRR) and 1228–1247 (ASTS…HTRL). T906 and T912 each carry phosphothreonine. A compositionally biased stretch (polar residues) spans 913–937 (PSYNRDNSISPESDVDTASTISLVT). Phosphoserine occurs at positions 922, 925, and 950. The span at 967-980 (DVTKSGSREKIEKK) shows a compositional bias: basic and acidic residues. S1008 carries the post-translational modification Phosphoserine. T1012 carries the phosphothreonine modification. Residues 1028–1038 (IMSSDQETYSC) show a composition bias toward polar residues. T1047 carries the phosphothreonine modification. Phosphoserine is present on S1048. The segment covering 1049–1062 (ADEHNIHSKLEGGK) has biased composition (basic and acidic residues). Over residues 1075–1093 (STSKSTTLPRPRPTRTSLL) the composition is skewed to low complexity. Residues S1102, S1104, S1122, S1123, S1135, S1150, and S1155 each carry the phosphoserine modification. Residues 1103 to 1588 (DSELADADKA…GEEEDVTVHE (486 aa)) are targeting to centrosomes. Positions 1112 to 1128 (ASVASEVSTTSSTSKPP) are enriched in low complexity. The segment covering 1158 to 1173 (EATISRSSASARTAEA) has biased composition (low complexity). S1188, S1195, S1200, S1229, S1231, S1241, S1260, and S1270 each carry phosphoserine. Residues 1191–1218 (TRANSISRLSDSKVKSMSSTHGSPSVNS) show a composition bias toward polar residues. The tract at residues 1315-1334 (SVTSSGTAPSTTVSTAATTP) is disordered. Position 1362 is a phosphoserine (S1362). A disordered region spans residues 1370-1398 (PLVHSKTPEGNNGRSVDSRPQPAEHPDHL). Positions 1467 to 1495 (KTSSMEISSILQELKRVEKQLQVINAMID) form a coiled coil. The disordered stretch occupies residues 1511-1540 (AILPSPPKQKSSPVNNHSSPSQTPALCPPE). Polar residues predominate over residues 1518–1534 (KQKSSPVNNHSSPSQTP). A phosphoserine mark is found at S1521 and S1522.

The protein belongs to the CEP170 family. As to quaternary structure, interacts with CCDC68 and CCDC120; leading to recruitment to centrosomes. Interacts with PLK1. Interacts with NIN. Interacts with FHDC1. Interacts with CCDC61. Interacts with TBK1; efficient complex formation may be dependent on the presence of CCDC61. Phosphorylated; probably by PLK1.

Its subcellular location is the cytoplasm. The protein localises to the cytoskeleton. It is found in the microtubule organizing center. It localises to the centrosome. The protein resides in the centriole. Its subcellular location is the spindle. Its function is as follows. Plays a role in microtubule organization. Required for centriole subdistal appendage assembly. The polypeptide is Centrosomal protein of 170 kDa (Cep170) (Mus musculus (Mouse)).